A 671-amino-acid chain; its full sequence is Acetyl-coenzyme A synthetase (671 aa).

The tract at residues 1–21 (MPTASASESSSNQPESSNASG) is disordered. Residues 221–224 (RRGK), Thr339, and Asn363 each bind CoA. ATP is bound by residues 415–417 (GEG), 439–444 (DTWWQT), Asp528, and Arg543. A CoA-binding site is contributed by Ser551. An ATP-binding site is contributed by Arg554. Residues Val565, His567, and Val570 each coordinate Mg(2+). Residue Arg611 participates in CoA binding. An N6-acetyllysine modification is found at Lys636.

Belongs to the ATP-dependent AMP-binding enzyme family. Requires Mg(2+) as cofactor. Post-translationally, acetylated. Deacetylation by the SIR2-homolog deacetylase activates the enzyme.

The enzyme catalyses acetate + ATP + CoA = acetyl-CoA + AMP + diphosphate. In terms of biological role, catalyzes the conversion of acetate into acetyl-CoA (AcCoA), an essential intermediate at the junction of anabolic and catabolic pathways. AcsA undergoes a two-step reaction. In the first half reaction, AcsA combines acetate with ATP to form acetyl-adenylate (AcAMP) intermediate. In the second half reaction, it can then transfer the acetyl group from AcAMP to the sulfhydryl group of CoA, forming the product AcCoA. The polypeptide is Acetyl-coenzyme A synthetase (Rhodopirellula baltica (strain DSM 10527 / NCIMB 13988 / SH1)).